Consider the following 230-residue polypeptide: 5'-methylthioadenosine/S-adenosylhomocysteine nucleosidase (230 aa).

Residue Glu12 is the Proton acceptor of the active site. Substrate contacts are provided by residues Gly78, Ile152, and 173–174; that span reads ME. Asp197 acts as the Proton donor in catalysis.

The protein belongs to the PNP/UDP phosphorylase family. MtnN subfamily.

The catalysed reaction is S-adenosyl-L-homocysteine + H2O = S-(5-deoxy-D-ribos-5-yl)-L-homocysteine + adenine. It carries out the reaction S-methyl-5'-thioadenosine + H2O = 5-(methylsulfanyl)-D-ribose + adenine. It catalyses the reaction 5'-deoxyadenosine + H2O = 5-deoxy-D-ribose + adenine. Its pathway is amino-acid biosynthesis; L-methionine biosynthesis via salvage pathway; S-methyl-5-thio-alpha-D-ribose 1-phosphate from S-methyl-5'-thioadenosine (hydrolase route): step 1/2. Catalyzes the irreversible cleavage of the glycosidic bond in both 5'-methylthioadenosine (MTA) and S-adenosylhomocysteine (SAH/AdoHcy) to adenine and the corresponding thioribose, 5'-methylthioribose and S-ribosylhomocysteine, respectively. Also cleaves 5'-deoxyadenosine, a toxic by-product of radical S-adenosylmethionine (SAM) enzymes, into 5-deoxyribose and adenine. This chain is 5'-methylthioadenosine/S-adenosylhomocysteine nucleosidase, found in Haemophilus influenzae (strain 86-028NP).